We begin with the raw amino-acid sequence, 420 residues long: Pyridinium-3,5-bisthiocarboxylic acid mononucleotide nickel insertion protein (420 aa).

The disordered stretch occupies residues 81–104; sequence NHEHKHNHHEIKNDEPAHSHEHHH. Over residues 90–99 the composition is skewed to basic and acidic residues; the sequence is EIKNDEPAHS.

The protein belongs to the LarC family.

The catalysed reaction is Ni(II)-pyridinium-3,5-bisthiocarboxylate mononucleotide = pyridinium-3,5-bisthiocarboxylate mononucleotide + Ni(2+). In terms of biological role, involved in the biosynthesis of a nickel-pincer cofactor ((SCS)Ni(II) pincer complex). Binds Ni(2+), and functions in nickel delivery to pyridinium-3,5-bisthiocarboxylic acid mononucleotide (P2TMN), to form the mature cofactor. Is thus probably required for the activation of nickel-pincer cofactor-dependent enzymes. In Clostridium acetobutylicum (strain ATCC 824 / DSM 792 / JCM 1419 / IAM 19013 / LMG 5710 / NBRC 13948 / NRRL B-527 / VKM B-1787 / 2291 / W), this protein is Pyridinium-3,5-bisthiocarboxylic acid mononucleotide nickel insertion protein.